The following is a 141-amino-acid chain: Small ribosomal subunit protein uS8c (141 aa).

This sequence belongs to the universal ribosomal protein uS8 family. In terms of assembly, part of the 30S ribosomal subunit.

Its subcellular location is the plastid. It localises to the chloroplast. Functionally, one of the primary rRNA binding proteins, it binds directly to 16S rRNA central domain where it helps coordinate assembly of the platform of the 30S subunit. This chain is Small ribosomal subunit protein uS8c (rps8), found in Pleurastrum terricola (Filamentous green alga).